Consider the following 586-residue polypeptide: Phosphomethylpyrimidine synthase (586 aa).

The segment at 1 to 33 (MKQSVSAEQIELKSSLPGSKKVYVDGPREGMKV) is disordered. The segment covering 22 to 33 (VYVDGPREGMKV) has biased composition (basic and acidic residues). Residues Asn-193, Met-222, Tyr-251, His-287, 307–309 (SRG), 348–351 (DGLR), and Glu-387 each bind substrate. Position 391 (His-391) interacts with Zn(2+). A substrate-binding site is contributed by Tyr-414. Residue His-455 participates in Zn(2+) binding. The [4Fe-4S] cluster site is built by Cys-535, Cys-538, and Cys-543.

It belongs to the ThiC family. [4Fe-4S] cluster serves as cofactor.

The enzyme catalyses 5-amino-1-(5-phospho-beta-D-ribosyl)imidazole + S-adenosyl-L-methionine = 4-amino-2-methyl-5-(phosphooxymethyl)pyrimidine + CO + 5'-deoxyadenosine + formate + L-methionine + 3 H(+). It participates in cofactor biosynthesis; thiamine diphosphate biosynthesis. Its function is as follows. Catalyzes the synthesis of the hydroxymethylpyrimidine phosphate (HMP-P) moiety of thiamine from aminoimidazole ribotide (AIR) in a radical S-adenosyl-L-methionine (SAM)-dependent reaction. The sequence is that of Phosphomethylpyrimidine synthase from Bacillus cereus (strain G9842).